The primary structure comprises 340 residues: S-adenosylmethionine:tRNA ribosyltransferase-isomerase (340 aa).

This sequence belongs to the QueA family. As to quaternary structure, monomer.

It is found in the cytoplasm. It catalyses the reaction 7-aminomethyl-7-carbaguanosine(34) in tRNA + S-adenosyl-L-methionine = epoxyqueuosine(34) in tRNA + adenine + L-methionine + 2 H(+). The protein operates within tRNA modification; tRNA-queuosine biosynthesis. Functionally, transfers and isomerizes the ribose moiety from AdoMet to the 7-aminomethyl group of 7-deazaguanine (preQ1-tRNA) to give epoxyqueuosine (oQ-tRNA). The chain is S-adenosylmethionine:tRNA ribosyltransferase-isomerase from Francisella tularensis subsp. holarctica (strain OSU18).